Here is a 224-residue protein sequence, read N- to C-terminus: Prophage repressor CohE (224 aa).

This chain is Prophage repressor CohE (cohE), found in Escherichia coli (strain K12).